The sequence spans 115 residues: Large ribosomal subunit protein bL19 (115 aa).

The protein belongs to the bacterial ribosomal protein bL19 family.

Functionally, this protein is located at the 30S-50S ribosomal subunit interface and may play a role in the structure and function of the aminoacyl-tRNA binding site. This chain is Large ribosomal subunit protein bL19, found in Clostridium kluyveri (strain ATCC 8527 / DSM 555 / NBRC 12016 / NCIMB 10680 / K1).